The following is a 108-amino-acid chain: UPF0102 protein Shewana3_3881 (108 aa).

This sequence belongs to the UPF0102 family.

The sequence is that of UPF0102 protein Shewana3_3881 from Shewanella sp. (strain ANA-3).